Here is a 523-residue protein sequence, read N- to C-terminus: Calcium uptake protein 3, mitochondrial (523 aa).

A mitochondrion-targeting transit peptide spans 1 to 6; it reads MAALRR. Residues 18–48 form a disordered region; sequence LAPQQPFLSPWGRPAGTAPGMSGRPFSGREE. Positions 225-260 constitute an EF-hand 1 domain; it reads KPHAGFRIAFNMFDTDGNEMVDKKEFLVLQEIFRKK. Ca(2+)-binding residues include Asp238, Asp240, Asn242, Met244, Asp246, and Glu249. The region spanning 414-429 is the EF-hand 2; degenerate domain; sequence ITFDEFRSFFQFLNNL. An EF-hand 3 domain is found at 463-498; it reads LSPHLVNTVFKIFDVDKDDQLSYKEFIGIMKDRLHR. Residues Asp476, Asp478, Asp480, Gln482, and Glu487 each coordinate Ca(2+).

It belongs to the MICU1 family. MICU3 subfamily. Heterodimer; disulfide-linked; heterodimerizes with MICU1. Component of the uniplex complex, composed of MCU, EMRE/SMDT1, MICU1 and MICU3 in a 4:4:1:1 stoichiometry.

The protein resides in the mitochondrion intermembrane space. It is found in the mitochondrion inner membrane. In terms of biological role, tissue-specific calcium sensor of the mitochondrial calcium uniporter (MCU) channel, which specifically regulates MCU channel activity in the central nervous system and skeletal muscle. Senses calcium level via its EF-hand domains: compared to MICU1 and MICU2, MICU3 has a higher affinity for calcium. MICU1 and MICU3 form a disulfide-linked heterodimer that stimulates and inhibits MCU activity, depending on the concentration of calcium. At low calcium levels, MICU1 occludes the pore of the MCU channel, preventing mitochondrial calcium uptake. At higher calcium levels, calcium-binding to MICU1 and MICU3 induces a conformational change that weakens MCU-MICU1 interactions and moves the MICU1-MICU3 heterodimer away from the pore, allowing calcium permeation through the MCU channel. The high calcium affinity of MICU3 lowers the calcium threshold necessary for calcium permeation through the MCU channel. The MICU1-MICU3 heterodimer promotes flexibility of neurotransmission in neuronal cells by enhancing mitochondrial calcium uptake in presynapses. It is also required to increase mitochondrial calcium uptake in skeletal muscle cells, thereby increasing ATP production. The sequence is that of Calcium uptake protein 3, mitochondrial from Rattus norvegicus (Rat).